Reading from the N-terminus, the 498-residue chain is Glycerol kinase (498 aa).

Residue Thr-11 coordinates ADP. Positions 11, 12, and 13 each coordinate ATP. Sn-glycerol 3-phosphate is bound at residue Thr-11. Arg-15 is a binding site for ADP. Sn-glycerol 3-phosphate is bound by residues Arg-81, Glu-82, Tyr-133, and Asp-242. Glycerol is bound by residues Arg-81, Glu-82, Tyr-133, Asp-242, and Gln-243. Positions 264 and 307 each coordinate ADP. Residues Thr-264, Gly-307, Gln-311, and Gly-412 each coordinate ATP. Positions 412 and 416 each coordinate ADP.

It belongs to the FGGY kinase family.

The catalysed reaction is glycerol + ATP = sn-glycerol 3-phosphate + ADP + H(+). The protein operates within polyol metabolism; glycerol degradation via glycerol kinase pathway; sn-glycerol 3-phosphate from glycerol: step 1/1. Inhibited by fructose 1,6-bisphosphate (FBP). Key enzyme in the regulation of glycerol uptake and metabolism. Catalyzes the phosphorylation of glycerol to yield sn-glycerol 3-phosphate. The chain is Glycerol kinase from Acidovorax sp. (strain JS42).